The chain runs to 188 residues: Phosphoribosylglycinamide formyltransferase (188 aa).

Glycine 12 to asparagine 14 contributes to the N(1)-(5-phospho-beta-D-ribosyl)glycinamide binding site. Residues lysine 66, methionine 91–isoleucine 94, and asparagine 108 each bind (6R)-10-formyltetrahydrofolate. Histidine 110 functions as the Proton donor in the catalytic mechanism.

The protein belongs to the GART family.

It carries out the reaction N(1)-(5-phospho-beta-D-ribosyl)glycinamide + (6R)-10-formyltetrahydrofolate = N(2)-formyl-N(1)-(5-phospho-beta-D-ribosyl)glycinamide + (6S)-5,6,7,8-tetrahydrofolate + H(+). It functions in the pathway purine metabolism; IMP biosynthesis via de novo pathway; N(2)-formyl-N(1)-(5-phospho-D-ribosyl)glycinamide from N(1)-(5-phospho-D-ribosyl)glycinamide (10-formyl THF route): step 1/1. In terms of biological role, catalyzes the transfer of a formyl group from 10-formyltetrahydrofolate to 5-phospho-ribosyl-glycinamide (GAR), producing 5-phospho-ribosyl-N-formylglycinamide (FGAR) and tetrahydrofolate. The chain is Phosphoribosylglycinamide formyltransferase from Staphylococcus aureus (strain COL).